We begin with the raw amino-acid sequence, 1588 residues long: RB1-inducible coiled-coil protein 1 (1588 aa).

S222, S229, and S237 each carry phosphoserine. Residue T238 is modified to Phosphothreonine. A phosphoserine mark is found at S243, S253, S257, and S261. Positions 565-568 (KPRK) match the Nuclear localization signal motif. Phosphoserine is present on residues S623, S646, S649, S652, S733, S1087, S1366, and S1478. Positions 638–674 (QKVSTSQASPQSAASPRIESTTGITTTTSPKTPPPLT) are disordered. Residues 643-667 (SQASPQSAASPRIESTTGITTTTSP) are compositionally biased toward low complexity. Positions 730–736 (DFMSAVN) match the FFAT motif. Coiled coils occupy residues 858 to 1393 (LKEK…TSSF) and 1440 to 1479 (SVQE…SQSL).

Part of a complex containing ATG13/KIAA0652, ULK1 and RB1CC1. This complex associates with ATG101. Interacts with PTK2/FAK1 and PTK2B/PYK2. Interacts with GABARAP and GABARAPL1. Interacts with ATG16L1; the interaction is required for ULK1 complex-dependent autophagy. Interacts with RNF111, SKI and SMAD7. Interacts with COP1 in the cytoplasm of proliferating cells in response to UV stimulation. Interacts with TP53. Interacts with C9orf72. Interacts with WDR45B. Interacts with ATG13; this interaction is increased in the absence of TMEM39A. Interacts with WIPI2. Interacts with TAX1BP1. Interacts (via phosphorylated FFAT motif) with MOSPD2. Post-translationally, phosphorylation at Ser-733 of the FFAT motif activates interaction with MOSPD2. In terms of tissue distribution, expressed abundantly in heart and testis, and moderately in kidney, liver and skeletal muscles. Very low expression levels in lung and spleen. Colocalizes with RB1 in various tissues.

The protein resides in the nucleus. It is found in the cytoplasm. Its subcellular location is the cytosol. It localises to the preautophagosomal structure. The protein localises to the lysosome. Its function is as follows. Involved in autophagy. Regulates early events but also late events of autophagosome formation through direct interaction with Atg16L1. Required for the formation of the autophagosome-like double-membrane structure that surrounds the Salmonella-containing vacuole (SCV) during S.typhimurium infection and subsequent xenophagy. Involved in repair of DNA damage caused by ionizing radiation, which subsequently improves cell survival by decreasing apoptosis. Inhibits PTK2/FAK1 and PTK2B/PYK2 kinase activity, affecting their downstream signaling pathways. Plays a role as a modulator of TGF-beta-signaling by restricting substrate specificity of RNF111. Functions as a DNA-binding transcription factor. Is a potent regulator of the RB1 pathway through induction of RB1 expression. Plays a crucial role in muscular differentiation. Plays an indispensable role in fetal hematopoiesis and in the regulation of neuronal homeostasis. The chain is RB1-inducible coiled-coil protein 1 from Mus musculus (Mouse).